A 193-amino-acid chain; its full sequence is dCTP deaminase (193 aa).

DCTP-binding positions include 110–115 (RSSLAR), aspartate 128, 136–138 (VLE), tyrosine 171, lysine 178, and glutamine 182. The active-site Proton donor/acceptor is the glutamate 138. The segment at 170–193 (PYNSRQDAKYRGQQGAVASRIDKD) is disordered.

The protein belongs to the dCTP deaminase family. As to quaternary structure, homotrimer.

It catalyses the reaction dCTP + H2O + H(+) = dUTP + NH4(+). It functions in the pathway pyrimidine metabolism; dUMP biosynthesis; dUMP from dCTP (dUTP route): step 1/2. Its function is as follows. Catalyzes the deamination of dCTP to dUTP. This is dCTP deaminase from Yersinia enterocolitica serotype O:8 / biotype 1B (strain NCTC 13174 / 8081).